The chain runs to 159 residues: Ribosomal RNA large subunit methyltransferase H (159 aa).

S-adenosyl-L-methionine is bound by residues L76, G108, and 127 to 132; that span reads FGRLTL.

This sequence belongs to the RNA methyltransferase RlmH family. Homodimer.

It localises to the cytoplasm. The enzyme catalyses pseudouridine(1915) in 23S rRNA + S-adenosyl-L-methionine = N(3)-methylpseudouridine(1915) in 23S rRNA + S-adenosyl-L-homocysteine + H(+). Its function is as follows. Specifically methylates the pseudouridine at position 1915 (m3Psi1915) in 23S rRNA. The sequence is that of Ribosomal RNA large subunit methyltransferase H from Listeria monocytogenes serotype 4a (strain HCC23).